Consider the following 363-residue polypeptide: Protein-arginine kinase (363 aa).

The region spanning 24–254 (IVLSSRIRLA…AQLIEQERSA (231 aa)) is the Phosphagen kinase C-terminal domain. ATP is bound by residues 27-31 (SSRIR), H92, R125, 176-180 (RASVM), and 207-212 (RGIYGE). Residues 337 to 342 (RDIKRA) carry the RDXXRA motif of the pArg binding pocket involved in allosteric regulation motif.

This sequence belongs to the ATP:guanido phosphotransferase family.

It carries out the reaction L-arginyl-[protein] + ATP = N(omega)-phospho-L-arginyl-[protein] + ADP + H(+). Appears to be allosterically activated by the binding of pArg-containing polypeptides to the pArg-binding pocket localized in the C-terminal domain of McsB. Functionally, catalyzes the specific phosphorylation of arginine residues in a large number of proteins. Is part of the bacterial stress response system. Protein arginine phosphorylation has a physiologically important role and is involved in the regulation of many critical cellular processes, such as protein homeostasis, motility, competence, and stringent and stress responses, by regulating gene expression and protein activity. The sequence is that of Protein-arginine kinase from Bacillus pumilus (strain SAFR-032).